The following is a 480-amino-acid chain: Beta-amyrin 28-monooxygenase (480 aa).

A helical membrane pass occupies residues 3–23 (VFFLSLLLICVLSVSIRLYLL). Position 427 (Cys427) interacts with heme.

Belongs to the cytochrome P450 family. The cofactor is heme. As to expression, expressed in leaves, stems and fruit skin.

The protein resides in the membrane. The enzyme catalyses beta-amyrin + 3 reduced [NADPH--hemoprotein reductase] + 3 O2 = oleanolate + 3 oxidized [NADPH--hemoprotein reductase] + 4 H2O + 4 H(+). Catalyzes the carboxylation of beta-amyrin at the C-28 position to form oleanolic acid. May be involved in saponin biosynthesis in fruit skin. The protein is Beta-amyrin 28-monooxygenase of Vitis vinifera (Grape).